The chain runs to 210 residues: Cytochrome c oxidase subunit 2 (210 aa).

The Mitochondrial intermembrane portion of the chain corresponds to 1-15; that stretch reads MSFILTFWMIFLMDS. Residues 16–36 traverse the membrane as a helical segment; that stretch reads IIVLISFSIFLSVWICALIIA. At 37-63 the chain is on the mitochondrial matrix side; it reads TVLTVTKINNIYCTWDFISSKFIDTYW. A helical membrane pass occupies residues 64-84; sequence FVLGMMFILCLLLRLCLLLYF. Residues 85–210 lie on the Mitochondrial intermembrane side of the membrane; it reads SCINFVSFDL…GFMPIVINFI (126 aa). Cu cation-binding residues include His-157, Cys-192, Glu-194, Cys-196, His-200, and Met-203. Residue Glu-194 participates in Mg(2+) binding.

It belongs to the cytochrome c oxidase subunit 2 family. As to quaternary structure, component of the cytochrome c oxidase (complex IV, CIV), a multisubunit enzyme composed of a catalytic core of 3 subunits and several supernumerary subunits. The complex exists as a monomer or a dimer and forms supercomplexes (SCs) in the inner mitochondrial membrane with ubiquinol-cytochrome c oxidoreductase (cytochrome b-c1 complex, complex III, CIII). Cu cation serves as cofactor.

It localises to the mitochondrion inner membrane. The enzyme catalyses 4 Fe(II)-[cytochrome c] + O2 + 8 H(+)(in) = 4 Fe(III)-[cytochrome c] + 2 H2O + 4 H(+)(out). In terms of biological role, component of the cytochrome c oxidase, the last enzyme in the mitochondrial electron transport chain which drives oxidative phosphorylation. The respiratory chain contains 3 multisubunit complexes succinate dehydrogenase (complex II, CII), ubiquinol-cytochrome c oxidoreductase (cytochrome b-c1 complex, complex III, CIII) and cytochrome c oxidase (complex IV, CIV), that cooperate to transfer electrons derived from NADH and succinate to molecular oxygen, creating an electrochemical gradient over the inner membrane that drives transmembrane transport and the ATP synthase. Cytochrome c oxidase is the component of the respiratory chain that catalyzes the reduction of oxygen to water. Electrons originating from reduced cytochrome c in the intermembrane space (IMS) are transferred via the dinuclear copper A center (CU(A)) of subunit 2 and heme A of subunit 1 to the active site in subunit 1, a binuclear center (BNC) formed by heme A3 and copper B (CU(B)). The BNC reduces molecular oxygen to 2 water molecules using 4 electrons from cytochrome c in the IMS and 4 protons from the mitochondrial matrix. This Trypanosoma brucei brucei protein is Cytochrome c oxidase subunit 2 (COXII).